The primary structure comprises 341 residues: Thymidine kinase (341 aa).

ATP is bound at residue 19–26 (GAYGIGKT). E48 acts as the Proton acceptor in catalysis. Positions 66 and 90 each coordinate substrate. R183 serves as a coordination point for ATP. Residue R189 coordinates substrate.

This sequence belongs to the herpesviridae thymidine kinase family. Homodimer.

It carries out the reaction thymidine + ATP = dTMP + ADP + H(+). Catalyzes the transfer of the gamma-phospho group of ATP to thymidine to generate dTMP in the salvage pathway of pyrimidine synthesis. The dTMP serves as a substrate for DNA polymerase during viral DNA replication. Allows the virus to be reactivated and to grow in non-proliferative cells lacking a high concentration of phosphorylated nucleic acid precursors. This is Thymidine kinase from Varicella-zoster virus (strain Dumas) (HHV-3).